The primary structure comprises 229 residues: Protein fmp52-2, mitochondrial (229 aa).

Residues Met-1–Lys-44 constitute a mitochondrion transit peptide.

Belongs to the FMP52 family.

Its subcellular location is the mitochondrion outer membrane. In Aspergillus terreus (strain NIH 2624 / FGSC A1156), this protein is Protein fmp52-2, mitochondrial (fmp522).